A 490-amino-acid chain; its full sequence is Probable cytosol aminopeptidase (490 aa).

Residues Lys-255 and Asp-260 each contribute to the Mn(2+) site. The active site involves Lys-267. The Mn(2+) site is built by Asp-278, Asp-337, and Glu-339. Arg-341 is a catalytic residue.

It belongs to the peptidase M17 family. Mn(2+) is required as a cofactor.

The protein resides in the cytoplasm. It catalyses the reaction Release of an N-terminal amino acid, Xaa-|-Yaa-, in which Xaa is preferably Leu, but may be other amino acids including Pro although not Arg or Lys, and Yaa may be Pro. Amino acid amides and methyl esters are also readily hydrolyzed, but rates on arylamides are exceedingly low.. The enzyme catalyses Release of an N-terminal amino acid, preferentially leucine, but not glutamic or aspartic acids.. Presumably involved in the processing and regular turnover of intracellular proteins. Catalyzes the removal of unsubstituted N-terminal amino acids from various peptides. This Gluconobacter oxydans (strain 621H) (Gluconobacter suboxydans) protein is Probable cytosol aminopeptidase.